Reading from the N-terminus, the 308-residue chain is Mannan endo-1,4-beta-mannosidase (308 aa).

E125 acts as the Proton donor in catalysis. Catalysis depends on E220, which acts as the Nucleophile. Residues 284–308 are disordered; that stretch reads DGLQETSKPSTVFTDDNGGHPEPPT. Over residues 287–297 the composition is skewed to polar residues; it reads QETSKPSTVFT.

The protein belongs to the glycosyl hydrolase 5 (cellulase A) family.

The catalysed reaction is Random hydrolysis of (1-&gt;4)-beta-D-mannosidic linkages in mannans, galactomannans and glucomannans.. Its function is as follows. Catalyzes the endo hydrolysis of beta-1,4-linked mannan, galactomannan and glucomannan. It is able to hydrolyze mannosidic linkages that are flanked by mannose or glucose. The polypeptide is Mannan endo-1,4-beta-mannosidase (Salipaludibacillus agaradhaerens (Bacillus agaradhaerens)).